Consider the following 193-residue polypeptide: dCTP deaminase (193 aa).

Residues 110 to 115 (RSSLAR), D128, 136 to 138 (VLE), Y171, K178, and Q182 contribute to the dCTP site. The active-site Proton donor/acceptor is the E138. The disordered stretch occupies residues 169 to 193 (RPYNRRQDAKYRDQQGAVASRIDKD).

This sequence belongs to the dCTP deaminase family. As to quaternary structure, homotrimer.

The enzyme catalyses dCTP + H2O + H(+) = dUTP + NH4(+). It functions in the pathway pyrimidine metabolism; dUMP biosynthesis; dUMP from dCTP (dUTP route): step 1/2. In terms of biological role, catalyzes the deamination of dCTP to dUTP. The sequence is that of dCTP deaminase from Cronobacter sakazakii (strain ATCC BAA-894) (Enterobacter sakazakii).